Here is a 199-residue protein sequence, read N- to C-terminus: Ribonuclease HII (199 aa).

The region spanning 11-199 (SRVAGVDEVG…RRSFLRRLLG (189 aa)) is the RNase H type-2 domain. Residues Asp-17, Glu-18, and Asp-113 each contribute to the a divalent metal cation site.

It belongs to the RNase HII family. It depends on Mn(2+) as a cofactor. Mg(2+) is required as a cofactor.

It is found in the cytoplasm. The enzyme catalyses Endonucleolytic cleavage to 5'-phosphomonoester.. Its function is as follows. Endonuclease that specifically degrades the RNA of RNA-DNA hybrids. This is Ribonuclease HII from Synechococcus sp. (strain CC9902).